The following is a 254-amino-acid chain: Protein N-terminal and lysine N-methyltransferase EFM7 (254 aa).

S-adenosyl-L-methionine contacts are provided by residues W57, 84-86 (GAA), D106, W138, and S165.

It belongs to the class I-like SAM-binding methyltransferase superfamily. EFM7 family.

Its subcellular location is the cytoplasm. In terms of biological role, S-adenosyl-L-methionine-dependent protein methyltransferase that trimethylates the N-terminal glycine 'Gly-2' of elongation factor 1-alpha, before also catalyzing the mono- and dimethylation of 'Lys-3'. This Debaryomyces hansenii (strain ATCC 36239 / CBS 767 / BCRC 21394 / JCM 1990 / NBRC 0083 / IGC 2968) (Yeast) protein is Protein N-terminal and lysine N-methyltransferase EFM7.